The primary structure comprises 119 residues: NAD(P)H-quinone oxidoreductase subunit M (119 aa).

The protein belongs to the complex I NdhM subunit family. NDH-1 can be composed of about 15 different subunits; different subcomplexes with different compositions have been identified which probably have different functions.

Its subcellular location is the cellular thylakoid membrane. It catalyses the reaction a plastoquinone + NADH + (n+1) H(+)(in) = a plastoquinol + NAD(+) + n H(+)(out). It carries out the reaction a plastoquinone + NADPH + (n+1) H(+)(in) = a plastoquinol + NADP(+) + n H(+)(out). Its function is as follows. NDH-1 shuttles electrons from an unknown electron donor, via FMN and iron-sulfur (Fe-S) centers, to quinones in the respiratory and/or the photosynthetic chain. The immediate electron acceptor for the enzyme in this species is believed to be plastoquinone. Couples the redox reaction to proton translocation, and thus conserves the redox energy in a proton gradient. Cyanobacterial NDH-1 also plays a role in inorganic carbon-concentration. The chain is NAD(P)H-quinone oxidoreductase subunit M from Crocosphaera subtropica (strain ATCC 51142 / BH68) (Cyanothece sp. (strain ATCC 51142)).